We begin with the raw amino-acid sequence, 1926 residues long: Myosin-15 (1926 aa).

The Myosin N-terminal SH3-like domain maps to 29-79 (DGKKKCWIPDGENAYIEAEVKGSEDDGTVIVETADGESLSIKEDKIQQMNP). The Myosin motor domain maps to 83 to 770 (EMIEDMAMLT…FLGQLEAIRD (688 aa)). N6,N6,N6-trimethyllysine is present on Lys127. 176 to 183 (GESGAGKT) contacts ATP. 2 actin-binding regions span residues 647 to 669 (LNKL…NPNV) and 749 to 763 (RFGI…GFLG). Residues 773 to 802 (LSKVFTLFQARAQGKLMRIKFQKILEERDA) enclose the IQ domain. The stretch at 833–1926 (KSSEVGEEVA…REFGKKVQEE (1094 aa)) forms a coiled coil.

It belongs to the TRAFAC class myosin-kinesin ATPase superfamily. Myosin family. In terms of assembly, muscle myosin is a hexameric protein that consists of 2 heavy chain subunits (MHC), 2 alkali light chain subunits (MLC) and 2 regulatory light chain subunits (MLC-2).

The protein resides in the cytoplasm. It localises to the myofibril. Muscle contraction. The polypeptide is Myosin-15 (MYH15) (Homo sapiens (Human)).